A 248-amino-acid chain; its full sequence is Large ribosomal subunit protein uL30 (248 aa).

The segment at 22–42 (KSQEKARAERQAEIEKKKAAN) is disordered. Over residues 24 to 42 (QEKARAERQAEIEKKKAAN) the composition is skewed to basic and acidic residues.

The protein belongs to the universal ribosomal protein uL30 family. In terms of assembly, component of the large ribosomal subunit (LSU). Mature N.crassa ribosomes consist of a small (40S) and a large (60S) subunit. The 40S small subunit contains 1 molecule of ribosomal RNA (18S rRNA) and at least 32 different proteins. The large 60S subunit contains 3 rRNA molecules (26S, 5.8S and 5S rRNA) and at least 42 different proteins.

It localises to the cytoplasm. Component of the ribosome, a large ribonucleoprotein complex responsible for the synthesis of proteins in the cell. The small ribosomal subunit (SSU) binds messenger RNAs (mRNAs) and translates the encoded message by selecting cognate aminoacyl-transfer RNA (tRNA) molecules. The large subunit (LSU) contains the ribosomal catalytic site termed the peptidyl transferase center (PTC), which catalyzes the formation of peptide bonds, thereby polymerizing the amino acids delivered by tRNAs into a polypeptide chain. The nascent polypeptides leave the ribosome through a tunnel in the LSU and interact with protein factors that function in enzymatic processing, targeting, and the membrane insertion of nascent chains at the exit of the ribosomal tunnel. In Neurospora crassa (strain ATCC 24698 / 74-OR23-1A / CBS 708.71 / DSM 1257 / FGSC 987), this protein is Large ribosomal subunit protein uL30 (rpl-7).